The chain runs to 656 residues: Methylenetetrahydrofolate reductase (NADPH) (656 aa).

Positions 1–46 are disordered; it reads MVNEARGNDSLNPCLEGSASSSSESSKDSSRCSTPGLDPERHERLR. Phosphoserine occurs at positions 10, 18, 20, 21, 23, 25, 26, 29, and 30. Residue Thr-34 is modified to Phosphothreonine. The active-site Proton donor/acceptor is Glu-63. Residues 63–68 and 94–95 contribute to the NAD(+) site; these read EFFPPR and TW. Residue Thr-94 is modified to Phosphothreonine. An FAD-binding site is contributed by 94-95; the sequence is TW. Residue Ser-103 is modified to Phosphoserine. FAD contacts are provided by residues His-127, 157–159, 174–175, Tyr-197, 201–204, Asp-210, and Lys-217; these read RGD, YA, and HPEA. A substrate-binding site is contributed by Asp-159. The substrate site is built by Gln-228, Tyr-321, and Arg-325. The residue at position 394 (Ser-394) is a Phosphoserine. Residue Thr-451 is modified to Phosphothreonine. Residues Asn-456, 461–464, 481–485, Thr-560, and Thr-573 each bind S-adenosyl-L-methionine; these read AAET and TINSQ.

It belongs to the methylenetetrahydrofolate reductase family. In terms of assembly, homodimer. The cofactor is FAD. Phosphorylation of an N-terminal serine-rich phosphorylation region increases sensitivity to S-adenosylmethionine and inhibition.

It carries out the reaction (6S)-5-methyl-5,6,7,8-tetrahydrofolate + NADP(+) = (6R)-5,10-methylene-5,6,7,8-tetrahydrofolate + NADPH + H(+). It functions in the pathway one-carbon metabolism; tetrahydrofolate interconversion. Its activity is regulated as follows. Allosterically regulated by S-adenosylmethionine (SAM). Catalyzes the conversion of 5,10-methylenetetrahydrofolate to 5-methyltetrahydrofolate, a cosubstrate for homocysteine remethylation to methionine. Represents a key regulatory connection between the folate and methionine cycles. This is Methylenetetrahydrofolate reductase (NADPH) (MTHFR) from Macaca fascicularis (Crab-eating macaque).